A 186-amino-acid polypeptide reads, in one-letter code: Adenylate kinase (186 aa).

10–15 (GSGKGT) is an ATP binding site. Residues 30–55 (ATGDVFRERMKTDMALRDIVSSGGYV) are NMP. AMP is bound by residues threonine 31, arginine 36, 53–55 (GYV), 81–84 (GYPR), and glutamine 88. An LID region spans residues 122 to 132 (ARSKESGRTDD). Position 123 (arginine 123) interacts with ATP. 2 residues coordinate AMP: arginine 129 and arginine 140. Lysine 168 serves as a coordination point for ATP.

This sequence belongs to the adenylate kinase family. Monomer.

The protein resides in the cytoplasm. It catalyses the reaction AMP + ATP = 2 ADP. The protein operates within purine metabolism; AMP biosynthesis via salvage pathway; AMP from ADP: step 1/1. Functionally, catalyzes the reversible transfer of the terminal phosphate group between ATP and AMP. Plays an important role in cellular energy homeostasis and in adenine nucleotide metabolism. This chain is Adenylate kinase, found in Tropheryma whipplei (strain TW08/27) (Whipple's bacillus).